The sequence spans 300 residues: Ribosomal RNA small subunit methyltransferase H (300 aa).

S-adenosyl-L-methionine-binding positions include 46-48 (GGH), D65, F92, D107, and Q114.

This sequence belongs to the methyltransferase superfamily. RsmH family.

The protein localises to the cytoplasm. The catalysed reaction is cytidine(1402) in 16S rRNA + S-adenosyl-L-methionine = N(4)-methylcytidine(1402) in 16S rRNA + S-adenosyl-L-homocysteine + H(+). Functionally, specifically methylates the N4 position of cytidine in position 1402 (C1402) of 16S rRNA. This chain is Ribosomal RNA small subunit methyltransferase H, found in Prochlorococcus marinus (strain MIT 9312).